Consider the following 78-residue polypeptide: Major outer membrane lipoprotein Lpp 1 (78 aa).

An N-terminal signal peptide occupies residues 1-20; it reads MNRTKLVLGAVILGSTLLAG. Cys21 carries the N-palmitoyl cysteine lipid modification. Cys21 carries the S-diacylglycerol cysteine lipid modification. 2 repeats span residues 24 to 34 and 38 to 48; these read NAKIDQLSSDV and NAKVDQLSNDV. A coiled-coil region spans residues 27-75; the sequence is IDQLSSDVQTLNAKVDQLSNDVNAMRSDVQAAKDDAARANQRLDNQATK. The segment at 56 to 78 is disordered; sequence QAAKDDAARANQRLDNQATKYRK. Residues 68–78 show a composition bias toward polar residues; that stretch reads RLDNQATKYRK. The residue at position 78 (Lys78) is an N6-murein peptidoglycan lysine.

This sequence belongs to the Lpp family. Homotrimer.

Its subcellular location is the cell outer membrane. It localises to the secreted. It is found in the cell wall. Its function is as follows. A highly abundant outer membrane lipoprotein that controls the distance between the inner and outer membranes. The only protein known to be covalently linked to the peptidoglycan network (PGN). Also non-covalently binds the PGN. The link between the cell outer membrane and PGN contributes to maintenance of the structural and functional integrity of the cell envelope, and maintains the correct distance between the PGN and the outer membrane. The polypeptide is Major outer membrane lipoprotein Lpp 1 (Salmonella paratyphi A (strain ATCC 9150 / SARB42)).